The chain runs to 374 residues: Beta-1,3-N-acetylglucosaminyltransferase lunatic fringe (374 aa).

The Cytoplasmic segment spans residues 1 to 8 (MLKTYRGK). The helical; Signal-anchor for type II membrane protein transmembrane segment at 9–29 (VVVSLAGATVTCLGFLLFLSQ) threads the bilayer. The Lumenal portion of the chain corresponds to 30–374 (HQRIQADGMQ…TPWCPPQVAY (345 aa)). An N-linked (GlcNAc...) asparagine glycan is attached at Asn40. A disordered region spans residues 80–100 (RSRREADKPSEAPGAATDAPP). Arg123 provides a ligand contact to substrate. Residue Asn162 is glycosylated (N-linked (GlcNAc...) asparagine). Cystine bridges form between Cys163–Cys174 and Cys192–Cys255. Asp196 is a substrate binding site. Position 197 (Asp197) interacts with Mn(2+). Asp285 is an active-site residue. His309 lines the Mn(2+) pocket. A disulfide bridge connects residues Cys359 and Cys368.

It belongs to the glycosyltransferase 31 family. Mn(2+) serves as cofactor. It depends on Co(2+) as a cofactor. In terms of processing, a soluble form may be derived from the membrane form by proteolytic processing. In terms of tissue distribution, in the embryo, expressed along the A-P axis of the neural tube, within the lateral plate mesoderm, in the presomitic mesoderm and the somites, in specific rhombomeres of the hindbrain (even-numbered rhombomeres) and in the otic vesicles.

It is found in the golgi apparatus membrane. It carries out the reaction 3-O-(alpha-L-fucosyl)-L-threonyl-[EGF-like domain protein] + UDP-N-acetyl-alpha-D-glucosamine = 3-O-(N-acetyl-beta-D-glucosaminyl-(1-&gt;3)-alpha-L-fucosyl)-L-threonyl-[EGF-like domain protein] + UDP + H(+). The enzyme catalyses 3-O-(alpha-L-fucosyl)-L-seryl-[EGF-like domain protein] + UDP-N-acetyl-alpha-D-glucosamine = 3-O-(N-acetyl-beta-D-glucosaminyl-(1-&gt;3)-alpha-L-fucosyl)-L-seryl-[EGF-like domain protein] + UDP + H(+). Functionally, glycosyltransferase that initiates the elongation of O-linked fucose residues attached to EGF-like repeats in the extracellular domain of Notch molecules. Involved in the correct formation of boundaries in the somites and hindbrain. Required for Delta-Notch-mediated induction of hypochord cells at the lateral borders of the midline precursor domain. The protein is Beta-1,3-N-acetylglucosaminyltransferase lunatic fringe (lfng) of Danio rerio (Zebrafish).